The following is a 324-amino-acid chain: Beta-ketoacyl-[acyl-carrier-protein] synthase III (324 aa).

Active-site residues include Cys-112 and His-249. The segment at 250–254 (QANDR) is ACP-binding. Asn-279 is a catalytic residue.

Belongs to the thiolase-like superfamily. FabH family. Homodimer.

The protein localises to the cytoplasm. It catalyses the reaction malonyl-[ACP] + acetyl-CoA + H(+) = 3-oxobutanoyl-[ACP] + CO2 + CoA. It functions in the pathway lipid metabolism; fatty acid biosynthesis. Functionally, catalyzes the condensation reaction of fatty acid synthesis by the addition to an acyl acceptor of two carbons from malonyl-ACP. Catalyzes the first condensation reaction which initiates fatty acid synthesis and may therefore play a role in governing the total rate of fatty acid production. Possesses both acetoacetyl-ACP synthase and acetyl transacylase activities. Its substrate specificity determines the biosynthesis of branched-chain and/or straight-chain of fatty acids. The polypeptide is Beta-ketoacyl-[acyl-carrier-protein] synthase III (Streptococcus gordonii (strain Challis / ATCC 35105 / BCRC 15272 / CH1 / DL1 / V288)).